The primary structure comprises 975 residues: Protein spalten (975 aa).

Disordered stretches follow at residues 1–31 (MKKMLFMNKKEKKEEQSPAHSSLAQQHQLAQ) and 64–99 (NLAQLSTSTSSNSSVNNTTNTNTNTTNSSSISSNNN). Basic and acidic residues predominate over residues 8–17 (NKKEKKEEQS). A coiled-coil region spans residues 21–70 (SSLAQQHQLAQQQYQLQQQQLQLQYQQHQQQLQLAQQQKQNEQNLAQLST). In terms of domain architecture, G-alpha spans 114–458 (FCGTIMILGH…DAEKRGFTTP (345 aa)). Residues 117 to 130 (TIMILGHTESGKTT) are G1 motif. GTP-binding positions include 122–129 (GHTESGKT), 261–267 (ISAYDQK), 286–290 (GCSGK), and 373–376 (NTSD). The G2 motif stretch occupies residues 259–267 (DIISAYDQK). The G3 motif stretch occupies residues 282–291 (VDLFGCSGKQ). Residues 369–376 (YLIFNTSD) form a G4 motif region. Residues 427-432 (VNLLDK) are G5 motif. Disordered regions lie at residues 455–520 (FTTP…GSST) and 541–700 (DNDS…VGSK). Composition is skewed to low complexity over residues 460–478 (NQSNSSPVSSIGSNSSRNS), 500–515 (LKNVNNNNNNNNNTTT), and 544–587 (SSYS…NNAT). The span at 595 to 688 (PPKEPKPVKP…DGAAESKKNG (94 aa)) shows a compositional bias: basic and acidic residues. The 269-residue stretch at 704–972 (ESGFGSLQGR…DNITVLVVIL (269 aa)) folds into the PPM-type phosphatase domain. Mn(2+) contacts are provided by D749, G750, D920, and D963.

It in the N-terminal section; belongs to the G-alpha family. In the C-terminal section; belongs to the PP2C family. G proteins are composed of 3 units; alpha, beta and gamma. The alpha chain contains the guanine nucleotide binding site. Requires Mg(2+) as cofactor. Mn(2+) is required as a cofactor.

It is found in the cytoplasm. The protein resides in the cytosol. The protein localises to the cell membrane. The enzyme catalyses O-phospho-L-seryl-[protein] + H2O = L-seryl-[protein] + phosphate. It carries out the reaction O-phospho-L-threonyl-[protein] + H2O = L-threonyl-[protein] + phosphate. Its activity is regulated as follows. Inhibited by 50 mM NaF (sodium fluoride). Functionally, involved in cell-type differentiation and morphogenesis. Dephosphorylates casein; in vitro. May also be involved as modulators or transducers in various transmembrane signaling systems. This is Protein spalten (spnA) from Dictyostelium discoideum (Social amoeba).